The chain runs to 222 residues: Histidine biosynthesis bifunctional protein HisIE (222 aa).

A phosphoribosyl-AMP cyclohydrolase region spans residues Met1–Ala128. A phosphoribosyl-ATP pyrophosphohydrolase region spans residues Cys129–Asn222.

The protein in the N-terminal section; belongs to the PRA-CH family. This sequence in the C-terminal section; belongs to the PRA-PH family.

The protein localises to the cytoplasm. The catalysed reaction is 1-(5-phospho-beta-D-ribosyl)-ATP + H2O = 1-(5-phospho-beta-D-ribosyl)-5'-AMP + diphosphate + H(+). It catalyses the reaction 1-(5-phospho-beta-D-ribosyl)-5'-AMP + H2O = 1-(5-phospho-beta-D-ribosyl)-5-[(5-phospho-beta-D-ribosylamino)methylideneamino]imidazole-4-carboxamide. It functions in the pathway amino-acid biosynthesis; L-histidine biosynthesis; L-histidine from 5-phospho-alpha-D-ribose 1-diphosphate: step 2/9. Its pathway is amino-acid biosynthesis; L-histidine biosynthesis; L-histidine from 5-phospho-alpha-D-ribose 1-diphosphate: step 3/9. The sequence is that of Histidine biosynthesis bifunctional protein HisIE from Prochlorococcus marinus (strain MIT 9313).